Consider the following 123-residue polypeptide: Homeobox protein CDX-1 (123 aa).

The homeobox DNA-binding region spans 5–64 (KDKYRVVYTDHQRLELEKEFHYSRYITIRRKSELAANLGLTERQVKIWFQNRRAKERKVN). The segment at 8-29 (YRVVYTDHQRLELEKEFHYSRY) is interaction with DNA. An interaction with 5-mCpG DNA region spans residues 47 to 58 (RQVKIWFQNRRA). A compositionally biased stretch (basic residues) spans 57–68 (RAKERKVNKKKQ). The tract at residues 57 to 123 (RAKERKVNKK…PVPVKEEFLP (67 aa)) is disordered.

It belongs to the Caudal homeobox family. In terms of tissue distribution, intestinal epithelium.

The protein resides in the nucleus. In terms of biological role, plays a role in transcriptional regulation. Involved in activated KRAS-mediated transcriptional activation of PRKD1 in colorectal cancer (CRC) cells. Binds to the PRKD1 promoter in colorectal cancer (CRC) cells. Could play a role in the terminal differentiation of the intestine. Binds preferentially to methylated DNA. The polypeptide is Homeobox protein CDX-1 (Cdx1) (Rattus norvegicus (Rat)).